Here is a 349-residue protein sequence, read N- to C-terminus: Dihydroorotase (349 aa).

Residues H17 and H19 each coordinate Zn(2+). Substrate-binding positions include 19–21 (HLR) and N45. Zn(2+) contacts are provided by K105, H142, and H180. N6-carboxylysine is present on K105. Substrate is bound at residue H142. Substrate is bound at residue L225. A Zn(2+)-binding site is contributed by D253. D253 is a catalytic residue. H257 and A269 together coordinate substrate.

It belongs to the metallo-dependent hydrolases superfamily. DHOase family. Class II DHOase subfamily. As to quaternary structure, homodimer. It depends on Zn(2+) as a cofactor.

The catalysed reaction is (S)-dihydroorotate + H2O = N-carbamoyl-L-aspartate + H(+). It functions in the pathway pyrimidine metabolism; UMP biosynthesis via de novo pathway; (S)-dihydroorotate from bicarbonate: step 3/3. Catalyzes the reversible cyclization of carbamoyl aspartate to dihydroorotate. This is Dihydroorotase from Nitrosomonas europaea (strain ATCC 19718 / CIP 103999 / KCTC 2705 / NBRC 14298).